The chain runs to 430 residues: Probable carboxypeptidase AO090003000058 (430 aa).

An N-terminal signal peptide occupies residues 1-16 (MKSIYSLVLCTALTAA). The N-linked (GlcNAc...) asparagine glycan is linked to asparagine 84. Aspartate 156 serves as a coordination point for Zn(2+). The active-site Proton acceptor is the glutamate 188. Residue glutamate 189 coordinates Zn(2+). Asparagine 285 is a glycosylation site (N-linked (GlcNAc...) asparagine).

This sequence belongs to the peptidase M20A family. The cofactor is Zn(2+).

It is found in the secreted. This chain is Probable carboxypeptidase AO090003000058, found in Aspergillus oryzae (strain ATCC 42149 / RIB 40) (Yellow koji mold).